Here is a 397-residue protein sequence, read N- to C-terminus: Cytochrome b (397 aa).

The next 4 helical transmembrane spans lie at 48-68 (FGSM…LLSA), 92-113 (WMLR…YAHI), 128-148 (WYFG…GYTL), and 193-213 (FYTL…LHLF). Heme b contacts are provided by His98 and His112. The heme b site is built by His197 and His211. His216 is an a ubiquinone binding site. 4 helical membrane-spanning segments follow: residues 241-261 (IKDL…VCVD), 303-323 (AGGV…PTLH), 335-355 (LNQV…WIGA), and 362-382 (YIIL…WTPF).

Belongs to the cytochrome b family. As to quaternary structure, the main subunits of complex b-c1 are: cytochrome b, cytochrome c1 and the Rieske protein. Heme b is required as a cofactor.

The protein localises to the mitochondrion inner membrane. Functionally, component of the ubiquinol-cytochrome c reductase complex (complex III or cytochrome b-c1 complex) that is part of the mitochondrial respiratory chain. The b-c1 complex mediates electron transfer from ubiquinol to cytochrome c. Contributes to the generation of a proton gradient across the mitochondrial membrane that is then used for ATP synthesis. In Mytilus edulis (Blue mussel), this protein is Cytochrome b (MT-CYB).